The primary structure comprises 467 residues: Sodium-dependent phosphate transport protein 1 (467 aa).

Asparagine 41, asparagine 49, and asparagine 58 each carry an N-linked (GlcNAc...) asparagine glycan. A run of 10 helical transmembrane segments spans residues 81–101 (GIIL…VGYF), 119–139 (SVLS…VVVC), 178–198 (FLLG…SLGW), 200–220 (MVFY…FVLF), 257–277 (AILK…FFWS), 301–321 (GFLS…AGQL), 339–359 (LFTA…PYLS), 365–385 (IVIF…GVFI), 401–421 (CSTL…GLIL), and 433–453 (FILM…VATA).

This sequence belongs to the major facilitator superfamily. Sodium/anion cotransporter family. In terms of assembly, interacts with PDZK1. Expressed in kidney cortex, liver and brain but not in other tissues.

The protein resides in the apical cell membrane. The catalysed reaction is 3 Na(+)(out) + phosphate(out) = 3 Na(+)(in) + phosphate(in). It catalyses the reaction urate(out) = urate(in). Important for the resorption of phosphate by the kidney. May be involved in actively transporting phosphate into cells via Na(+) cotransport in the renal brush border membrane. Plays a role in urate transport in the kidney. The sequence is that of Sodium-dependent phosphate transport protein 1 (SLC17A1) from Homo sapiens (Human).